The sequence spans 497 residues: Tyrosine-protein kinase SPK-1 (497 aa).

Residues 1-25 (MGQKFSIKCKKQSKNKNTSKCQKIP) form a disordered region. The SH3 domain maps to 33–94 (PGSYMVKAKY…PSNYVSKQDG (62 aa)). One can recognise an SH2 domain in the interval 100 to 200 (EAWREIQRWE…NTHIPLTDPM (101 aa)). The Protein kinase domain maps to 220-482 (IEILNEIGRG…LVLQEKMDLL (263 aa)). ATP is bound by residues 226 to 234 (IGRGFFGSV) and Lys-248. Asp-342 functions as the Proton acceptor in the catalytic mechanism.

The protein belongs to the protein kinase superfamily. Tyr protein kinase family.

The enzyme catalyses L-tyrosyl-[protein] + ATP = O-phospho-L-tyrosyl-[protein] + ADP + H(+). The chain is Tyrosine-protein kinase SPK-1 from Girardia tigrina (Planarian).